The sequence spans 208 residues: Protein-L-isoaspartate O-methyltransferase (208 aa).

Ser-59 is an active-site residue.

The protein belongs to the methyltransferase superfamily. L-isoaspartyl/D-aspartyl protein methyltransferase family.

Its subcellular location is the cytoplasm. The enzyme catalyses [protein]-L-isoaspartate + S-adenosyl-L-methionine = [protein]-L-isoaspartate alpha-methyl ester + S-adenosyl-L-homocysteine. Its function is as follows. Catalyzes the methyl esterification of L-isoaspartyl residues in peptides and proteins that result from spontaneous decomposition of normal L-aspartyl and L-asparaginyl residues. It plays a role in the repair and/or degradation of damaged proteins. In Escherichia coli O7:K1 (strain IAI39 / ExPEC), this protein is Protein-L-isoaspartate O-methyltransferase.